The sequence spans 419 residues: Protein transport protein sec9 (419 aa).

A compositionally biased stretch (basic residues) spans 1 to 11 (MKKLFKKKKGV). Disordered regions lie at residues 1–60 (MKKL…TYGS), 116–143 (ARKDMPPMKSSAAVTERPSMHRSAPSQD), and 156–186 (ARIQNDDESTTDTIPHNDDGTEGDEYGEGYR). The segment covering 21–32 (ESNSNTATNAPS) has biased composition (polar residues). Over residues 36–60 (GGTTANSYSSNSYNDNNNSNSTYGS) the composition is skewed to low complexity. At Ser141 the chain carries Phosphoserine. 2 consecutive t-SNARE coiled-coil homology domains span residues 203–265 (QFVK…AREL) and 356–418 (DAME…LRHI).

It belongs to the SNAP-25 family.

Its function is as follows. Has a role in cell separation, a final step of cytokinesis and in the assembly of the forespore membrane. May have a role in the transport of secretory proteins to these growing sites. The sequence is that of Protein transport protein sec9 (sec9) from Schizosaccharomyces pombe (strain 972 / ATCC 24843) (Fission yeast).